Consider the following 342-residue polypeptide: N-acetyl-gamma-glutamyl-phosphate reductase (342 aa).

The active site involves C148.

The protein belongs to the NAGSA dehydrogenase family. Type 1 subfamily.

It localises to the cytoplasm. The catalysed reaction is N-acetyl-L-glutamate 5-semialdehyde + phosphate + NADP(+) = N-acetyl-L-glutamyl 5-phosphate + NADPH + H(+). It functions in the pathway amino-acid biosynthesis; L-arginine biosynthesis; N(2)-acetyl-L-ornithine from L-glutamate: step 3/4. Its function is as follows. Catalyzes the NADPH-dependent reduction of N-acetyl-5-glutamyl phosphate to yield N-acetyl-L-glutamate 5-semialdehyde. The sequence is that of N-acetyl-gamma-glutamyl-phosphate reductase from Methanococcus vannielii (strain ATCC 35089 / DSM 1224 / JCM 13029 / OCM 148 / SB).